A 199-amino-acid chain; its full sequence is Putative DNA-directed RNA polymerase subunit L376 (199 aa).

Belongs to the eukaryotic RPB7/RPC8 RNA polymerase subunit family.

It is found in the virion. It catalyses the reaction RNA(n) + a ribonucleoside 5'-triphosphate = RNA(n+1) + diphosphate. This Acanthamoeba polyphaga (Amoeba) protein is Putative DNA-directed RNA polymerase subunit L376.